Here is a 910-residue protein sequence, read N- to C-terminus: E3 ubiquitin-protein ligase HUL5 (910 aa).

M1 carries the post-translational modification N-acetylmethionine. The interval 1–25 (MLNFTGQTRRRNVNLGNRTRNSKKD) is disordered. The HECT domain maps to 810–910 (YGGYKEEDQT…INSGARFDLS (101 aa)). The active-site Glycyl thioester intermediate is C878.

The protein belongs to the UBE3C family. As to quaternary structure, interacts with 19S proteasomes.

The protein resides in the cytoplasm. It is found in the cytosol. The protein localises to the nucleus. It catalyses the reaction S-ubiquitinyl-[E2 ubiquitin-conjugating enzyme]-L-cysteine + [acceptor protein]-L-lysine = [E2 ubiquitin-conjugating enzyme]-L-cysteine + N(6)-ubiquitinyl-[acceptor protein]-L-lysine.. Its pathway is protein modification; protein ubiquitination. In terms of biological role, non-essential E3 ubiquitin-protein ligase that specifically catalyzes 'Lys-29'- and 'Lys-48'-linked polyubiquitin chains. Accepts ubiquitin from an E2 ubiquitin-conjugating enzyme in the form of a thioester and then directly transfers the ubiquitin to targeted substrates. Associates with the proteasome and promotes elongation of ubiquitin chains on substrates bound to the proteasome. Elongation of ubiquitin chains on substrates bound to the proteasome promotes proteasomal processivity. Also promotes ubiquitin elongation of 26S proteasome subunit RPN10. Involved in the stress response required to maintain cell fitness following heat-shock: acts by mediating ubiquitination of cytosolic misfolded proteins, leading to their subsequent degradation. The sequence is that of E3 ubiquitin-protein ligase HUL5 from Saccharomyces cerevisiae (strain ATCC 204508 / S288c) (Baker's yeast).